Consider the following 423-residue polypeptide: Histidine--tRNA ligase (423 aa).

It belongs to the class-II aminoacyl-tRNA synthetase family. In terms of assembly, homodimer.

It localises to the cytoplasm. It catalyses the reaction tRNA(His) + L-histidine + ATP = L-histidyl-tRNA(His) + AMP + diphosphate + H(+). This Halorhodospira halophila (strain DSM 244 / SL1) (Ectothiorhodospira halophila (strain DSM 244 / SL1)) protein is Histidine--tRNA ligase.